The chain runs to 190 residues: Cell division protein SepF (190 aa).

This sequence belongs to the SepF family. As to quaternary structure, homodimer. Interacts with FtsZ.

Its subcellular location is the cytoplasm. Its function is as follows. Cell division protein that is part of the divisome complex and is recruited early to the Z-ring. Probably stimulates Z-ring formation, perhaps through the cross-linking of FtsZ protofilaments. Its function overlaps with FtsA. This is Cell division protein SepF from Synechococcus sp. (strain WH7803).